Consider the following 316-residue polypeptide: Secondary metabolism regulator laeA (316 aa).

This sequence belongs to the methyltransferase superfamily. LaeA methyltransferase family. As to quaternary structure, component of the heterotrimeric velvet complex composed of laeA, veA and velB; VeA acting as a bridging protein between laeA and velB.

The protein localises to the nucleus. The enzyme catalyses L-methionyl-[protein] + S-adenosyl-L-methionine = S-methyl-L-methionyl-[protein] + S-adenosyl-L-homocysteine. Functionally, methyltransferase that performs automethylation. No other methyl-accepting substrate has been identified yet. Component of the velvet transcription factor complex that acts as a global regulator for secondary metabolite gene expression. Controls the biosynthetic gene cluster for beauvericin, a depsipeptide mycotoxin that functions as a virulence determinant. The velvet complex also regulates chromatin structure and transcription of siderophore biosynthetic genes and is required for infection of tomato plants. The velvet complex also governs expression of nitrate metabolism genes. This chain is Secondary metabolism regulator laeA, found in Fusarium oxysporum f. sp. lycopersici (strain 4287 / CBS 123668 / FGSC 9935 / NRRL 34936) (Fusarium vascular wilt of tomato).